A 220-amino-acid chain; its full sequence is Large ribosomal subunit protein uL10c (220 aa).

Residues 1-41 constitute a chloroplast transit peptide; the sequence is MEVALLSFSSSLSPLCHQRISTLTPKTSNSPNYPRLPVIRS.

Belongs to the universal ribosomal protein uL10 family. Part of the 50S ribosomal subunit.

It localises to the plastid. Its subcellular location is the chloroplast. Its function is as follows. This protein binds directly to 23S ribosomal RNA. This Arabidopsis thaliana (Mouse-ear cress) protein is Large ribosomal subunit protein uL10c (RPL10).